Reading from the N-terminus, the 534-residue chain is GMP synthase [glutamine-hydrolyzing] (534 aa).

A Glutamine amidotransferase type-1 domain is found at 20–210 (PVLVIDFGAQ…LLVGAGCRPS (191 aa)). The Nucleophile role is filled by Cys-97. Residues His-184 and Glu-186 contribute to the active site. The GMPS ATP-PPase domain maps to 211-408 (WTMINIVEEA…LGLPEDIVWR (198 aa)). Residue 238-244 (SGGVDSA) coordinates ATP.

Homodimer.

It carries out the reaction XMP + L-glutamine + ATP + H2O = GMP + L-glutamate + AMP + diphosphate + 2 H(+). It functions in the pathway purine metabolism; GMP biosynthesis; GMP from XMP (L-Gln route): step 1/1. Its function is as follows. Catalyzes the synthesis of GMP from XMP. This Parafrankia sp. (strain EAN1pec) protein is GMP synthase [glutamine-hydrolyzing].